Here is a 355-residue protein sequence, read N- to C-terminus: F-box only protein 32 (355 aa).

The short motif at 62-67 (KKRKKD) is the Nuclear localization signal element. The Nuclear export signal motif lies at 169–173 (LLQTL). The F-box domain maps to 223–271 (LTITDLPVCLQLNIMQRLSDGRDLVSLGQAAPDLHVLSEDRLLWKRLCQ). The Bipartite nuclear localization signal signature appears at 280-295 (RKRLILSDKGQLDWKK).

As to quaternary structure, part of the SCF (SKP1-CUL1-F-box) E3 ubiquitin-protein ligase complex SCF(FBXO32) formed of CUL1, SKP1, RBX1 and FBXO32. In terms of tissue distribution, specifically expressed in cardiac and skeletal muscle.

It localises to the cytoplasm. Its subcellular location is the nucleus. It participates in protein modification; protein ubiquitination. Its function is as follows. Substrate recognition component of a SCF (SKP1-CUL1-F-box protein) E3 ubiquitin-protein ligase complex which mediates the ubiquitination and subsequent proteasomal degradation of target proteins. Probably recognizes and binds to phosphorylated target proteins during skeletal muscle atrophy. Recognizes TERF1. This chain is F-box only protein 32 (Fbxo32), found in Mus musculus (Mouse).